A 75-amino-acid polypeptide reads, in one-letter code: Small ribosomal subunit protein bS18 (75 aa).

Belongs to the bacterial ribosomal protein bS18 family. In terms of assembly, part of the 30S ribosomal subunit. Forms a tight heterodimer with protein bS6.

In terms of biological role, binds as a heterodimer with protein bS6 to the central domain of the 16S rRNA, where it helps stabilize the platform of the 30S subunit. The polypeptide is Small ribosomal subunit protein bS18 (Shewanella amazonensis (strain ATCC BAA-1098 / SB2B)).